Consider the following 169-residue polypeptide: NADH-quinone oxidoreductase subunit I (169 aa).

2 consecutive 4Fe-4S ferredoxin-type domains span residues 61 to 90 (RRYDNGEERCIACKLCEAVCPALAITIESE) and 100 to 129 (TRYDIDLTKCIFCGFCEESCPVDSIVETHI). [4Fe-4S] cluster is bound by residues C70, C73, C76, C80, C109, C112, C115, and C119.

This sequence belongs to the complex I 23 kDa subunit family. As to quaternary structure, NDH-1 is composed of 14 different subunits. Subunits NuoA, H, J, K, L, M, N constitute the membrane sector of the complex. [4Fe-4S] cluster is required as a cofactor.

It is found in the cell inner membrane. It carries out the reaction a quinone + NADH + 5 H(+)(in) = a quinol + NAD(+) + 4 H(+)(out). In terms of biological role, NDH-1 shuttles electrons from NADH, via FMN and iron-sulfur (Fe-S) centers, to quinones in the respiratory chain. The immediate electron acceptor for the enzyme in this species is believed to be ubiquinone. Couples the redox reaction to proton translocation (for every two electrons transferred, four hydrogen ions are translocated across the cytoplasmic membrane), and thus conserves the redox energy in a proton gradient. The polypeptide is NADH-quinone oxidoreductase subunit I (Verminephrobacter eiseniae (strain EF01-2)).